We begin with the raw amino-acid sequence, 702 residues long: Threonine--tRNA ligase (702 aa).

The interval 1-30 (MSAPVHPVPGADGGDPLRPATPGLRSPQVP) is disordered. The 70-residue stretch at 15 to 84 (DPLRPATPGL…DVDVEVTPVP (70 aa)) folds into the TGS domain. A catalytic region spans residues 279 to 585 (DHRKLGIELD…LTEHYAGAFP (307 aa)). Zn(2+)-binding residues include cysteine 384, histidine 435, and histidine 562.

It belongs to the class-II aminoacyl-tRNA synthetase family. As to quaternary structure, homodimer. The cofactor is Zn(2+).

It localises to the cytoplasm. The catalysed reaction is tRNA(Thr) + L-threonine + ATP = L-threonyl-tRNA(Thr) + AMP + diphosphate + H(+). Functionally, catalyzes the attachment of threonine to tRNA(Thr) in a two-step reaction: L-threonine is first activated by ATP to form Thr-AMP and then transferred to the acceptor end of tRNA(Thr). Also edits incorrectly charged L-seryl-tRNA(Thr). The protein is Threonine--tRNA ligase of Mycobacterium leprae (strain Br4923).